The primary structure comprises 29 residues: Toxin II.9 (29 aa).

Positions 2 to 29 (KDGYLVNKYTGCKVNCYKLGENKFCNRE) constitute an LCN-type CS-alpha/beta domain.

This sequence belongs to the long (4 C-C) scorpion toxin superfamily. Sodium channel inhibitor family. Beta subfamily. Expressed by the venom gland.

It localises to the secreted. In terms of biological role, binds to sodium channels (Nav) and shift the voltage of activation toward more negative potentials. This toxin is active on crustaceans. This is Toxin II.9 from Centruroides limpidus (Mexican scorpion).